Consider the following 93-residue polypeptide: Large ribosomal subunit protein bL27 (93 aa).

Positions 1–22 (MAHKKAGGSSRNGRDSAGRRLG) are disordered.

This sequence belongs to the bacterial ribosomal protein bL27 family.

This is Large ribosomal subunit protein bL27 from Parvibaculum lavamentivorans (strain DS-1 / DSM 13023 / NCIMB 13966).